Here is a 798-residue protein sequence, read N- to C-terminus: Protocadherin beta-14 (798 aa).

An N-terminal signal peptide occupies residues 1–26; sequence MEIRGALDLRKRQVLIFLVLLGLSRA. The Extracellular segment spans residues 27 to 686; the sequence is GTESAHYSVA…APAQAQADSL (660 aa). Cadherin domains lie at 35–133, 138–242, 247–347, 352–451, and 456–561; these read VAEE…SPTF, ILIK…APEF, YEVQ…PPEV, ITKR…APTF, and YTLF…SPFV. A disulfide bond links C96 and C102. N-linked (GlcNAc...) asparagine glycosylation occurs at N169. N-linked (GlcNAc...) asparagine glycans are attached at residues N359, N418, N436, N487, and N567. A Cadherin 6 domain is found at 568–671; the sequence is GSAPCTELVP…LVDGFSQPYL (104 aa). Residues 687 to 711 form a helical membrane-spanning segment; that stretch reads TVYLVVALASVSSLFLFSVLLFVAV. The Cytoplasmic segment spans residues 712-798; sequence RLCRRSRAAS…FRNSFGLNIQ (87 aa).

Its subcellular location is the cell membrane. Potential calcium-dependent cell-adhesion protein. May be involved in the establishment and maintenance of specific neuronal connections in the brain. In Homo sapiens (Human), this protein is Protocadherin beta-14 (PCDHB14).